Here is a 420-residue protein sequence, read N- to C-terminus: Multifunctional CCA protein (420 aa).

2 residues coordinate ATP: G8 and R11. Residues G8 and R11 each coordinate CTP. Residues D21 and D23 each contribute to the Mg(2+) site. The ATP site is built by R91, R137, and R140. Residues R91, R137, and R140 each coordinate CTP. Residues 228–334 (TFVHTMLVLQ…LKLFNRLDVW (107 aa)) enclose the HD domain.

Belongs to the tRNA nucleotidyltransferase/poly(A) polymerase family. Bacterial CCA-adding enzyme type 1 subfamily. As to quaternary structure, monomer. Can also form homodimers and oligomers. Requires Mg(2+) as cofactor. Ni(2+) is required as a cofactor.

The enzyme catalyses a tRNA precursor + 2 CTP + ATP = a tRNA with a 3' CCA end + 3 diphosphate. It catalyses the reaction a tRNA with a 3' CCA end + 2 CTP + ATP = a tRNA with a 3' CCACCA end + 3 diphosphate. In terms of biological role, catalyzes the addition and repair of the essential 3'-terminal CCA sequence in tRNAs without using a nucleic acid template. Adds these three nucleotides in the order of C, C, and A to the tRNA nucleotide-73, using CTP and ATP as substrates and producing inorganic pyrophosphate. tRNA 3'-terminal CCA addition is required both for tRNA processing and repair. Also involved in tRNA surveillance by mediating tandem CCA addition to generate a CCACCA at the 3' terminus of unstable tRNAs. While stable tRNAs receive only 3'-terminal CCA, unstable tRNAs are marked with CCACCA and rapidly degraded. This Pasteurella multocida (strain Pm70) protein is Multifunctional CCA protein.